Here is a 325-residue protein sequence, read N- to C-terminus: NADH-quinone oxidoreductase subunit H (325 aa).

Transmembrane regions (helical) follow at residues 5-25, 75-95, 117-137, 157-177, 190-210, 240-260, 268-288, and 305-325; these read LIII…AAAY, FVYW…FVLI, VGVV…VLAG, ISYE…TGTL, WLIW…FAET, FFLG…TLFF, DIPI…FMWV, and WKVL…FTLV.

The protein belongs to the complex I subunit 1 family. In terms of assembly, NDH-1 is composed of 14 different subunits. Subunits NuoA, H, J, K, L, M, N constitute the membrane sector of the complex.

The protein resides in the cell inner membrane. It catalyses the reaction a quinone + NADH + 5 H(+)(in) = a quinol + NAD(+) + 4 H(+)(out). NDH-1 shuttles electrons from NADH, via FMN and iron-sulfur (Fe-S) centers, to quinones in the respiratory chain. The immediate electron acceptor for the enzyme in this species is believed to be ubiquinone. Couples the redox reaction to proton translocation (for every two electrons transferred, four hydrogen ions are translocated across the cytoplasmic membrane), and thus conserves the redox energy in a proton gradient. This subunit may bind ubiquinone. This is NADH-quinone oxidoreductase subunit H from Protochlamydia amoebophila (strain UWE25).